The chain runs to 178 residues: ATP synthase subunit delta (178 aa).

This sequence belongs to the ATPase delta chain family. As to quaternary structure, F-type ATPases have 2 components, F(1) - the catalytic core - and F(0) - the membrane proton channel. F(1) has five subunits: alpha(3), beta(3), gamma(1), delta(1), epsilon(1). F(0) has three main subunits: a(1), b(2) and c(10-14). The alpha and beta chains form an alternating ring which encloses part of the gamma chain. F(1) is attached to F(0) by a central stalk formed by the gamma and epsilon chains, while a peripheral stalk is formed by the delta and b chains.

The protein localises to the cell membrane. In terms of biological role, f(1)F(0) ATP synthase produces ATP from ADP in the presence of a proton or sodium gradient. F-type ATPases consist of two structural domains, F(1) containing the extramembraneous catalytic core and F(0) containing the membrane proton channel, linked together by a central stalk and a peripheral stalk. During catalysis, ATP synthesis in the catalytic domain of F(1) is coupled via a rotary mechanism of the central stalk subunits to proton translocation. Its function is as follows. This protein is part of the stalk that links CF(0) to CF(1). It either transmits conformational changes from CF(0) to CF(1) or is implicated in proton conduction. In Moorella thermoacetica (strain ATCC 39073 / JCM 9320), this protein is ATP synthase subunit delta.